A 316-amino-acid polypeptide reads, in one-letter code: tRNA dimethylallyltransferase (316 aa).

An ATP-binding site is contributed by 9–16; sequence GPTASGKS. 11 to 16 contributes to the substrate binding site; the sequence is TASGKS. Interaction with substrate tRNA regions lie at residues 34-37 and 158-162; these read DSMQ and QRLAR.

Belongs to the IPP transferase family. In terms of assembly, monomer. Mg(2+) serves as cofactor.

The enzyme catalyses adenosine(37) in tRNA + dimethylallyl diphosphate = N(6)-dimethylallyladenosine(37) in tRNA + diphosphate. Its function is as follows. Catalyzes the transfer of a dimethylallyl group onto the adenine at position 37 in tRNAs that read codons beginning with uridine, leading to the formation of N6-(dimethylallyl)adenosine (i(6)A). This is tRNA dimethylallyltransferase from Hyphomonas neptunium (strain ATCC 15444).